A 289-amino-acid chain; its full sequence is Acetyl-coenzyme A carboxylase carboxyl transferase subunit beta 2 (289 aa).

The CoA carboxyltransferase N-terminal domain maps to 25–289 (VWTKCPSCDQ…TNTSIRLEVK (265 aa)). Residues Cys-29, Cys-32, Cys-48, and Cys-51 each coordinate Zn(2+). The C4-type zinc-finger motif lies at 29–51 (CPSCDQVLYRIALKENLEVCPKC).

It belongs to the AccD/PCCB family. In terms of assembly, acetyl-CoA carboxylase is a heterohexamer composed of biotin carboxyl carrier protein (AccB), biotin carboxylase (AccC) and two subunits each of ACCase subunit alpha (AccA) and ACCase subunit beta (AccD). Requires Zn(2+) as cofactor.

Its subcellular location is the cytoplasm. It carries out the reaction N(6)-carboxybiotinyl-L-lysyl-[protein] + acetyl-CoA = N(6)-biotinyl-L-lysyl-[protein] + malonyl-CoA. It functions in the pathway lipid metabolism; malonyl-CoA biosynthesis; malonyl-CoA from acetyl-CoA: step 1/1. Component of the acetyl coenzyme A carboxylase (ACC) complex. Biotin carboxylase (BC) catalyzes the carboxylation of biotin on its carrier protein (BCCP) and then the CO(2) group is transferred by the transcarboxylase to acetyl-CoA to form malonyl-CoA. The protein is Acetyl-coenzyme A carboxylase carboxyl transferase subunit beta 2 of Vibrio parahaemolyticus serotype O3:K6 (strain RIMD 2210633).